Here is a 130-residue protein sequence, read N- to C-terminus: uncharacterized protein (130 aa).

The tract at residues 1–34 is disordered; sequence MTAVGGSPPTRRCPATEDRAPATVATPSSTDPTA.

To M.tuberculosis Rv1583c.

This is an uncharacterized protein from Mycobacterium tuberculosis (strain CDC 1551 / Oshkosh).